Here is a 129-residue protein sequence, read N- to C-terminus: Holo-[acyl-carrier-protein] synthase (129 aa).

Residues Asp8 and Glu58 each contribute to the Mg(2+) site.

The protein belongs to the P-Pant transferase superfamily. AcpS family. Mg(2+) is required as a cofactor.

The protein resides in the cytoplasm. It catalyses the reaction apo-[ACP] + CoA = holo-[ACP] + adenosine 3',5'-bisphosphate + H(+). Transfers the 4'-phosphopantetheine moiety from coenzyme A to a Ser of acyl-carrier-protein. The protein is Holo-[acyl-carrier-protein] synthase of Geobacillus kaustophilus (strain HTA426).